A 523-amino-acid polypeptide reads, in one-letter code: GMP synthase [glutamine-hydrolyzing] (523 aa).

In terms of domain architecture, Glutamine amidotransferase type-1 spans 8–205 (KILILDFGSQ…VVGICGCECK (198 aa)). The Nucleophile role is filled by cysteine 85. Catalysis depends on residues histidine 179 and glutamate 181. Residues 206–398 (WTAENIIERR…LGLPAEMLNR (193 aa)) form the GMPS ATP-PPase domain. 233–239 (SGGVDSS) serves as a coordination point for ATP.

Homodimer.

It catalyses the reaction XMP + L-glutamine + ATP + H2O = GMP + L-glutamate + AMP + diphosphate + 2 H(+). It functions in the pathway purine metabolism; GMP biosynthesis; GMP from XMP (L-Gln route): step 1/1. Functionally, catalyzes the synthesis of GMP from XMP. In Actinobacillus pleuropneumoniae serotype 5b (strain L20), this protein is GMP synthase [glutamine-hydrolyzing].